The sequence spans 314 residues: MRFKGLDLNLLVALDALMTERNLTAAARSINLSQPAMSAAVGRLRTYFNDDLFTMVGRELVPTPRAERLAPSVREALLHIQVSIISWDPFCPAQSDRCFRVILSDYAALVFFEKVVTRVAREAPAVSFELLPIADNYDEYLRRGDADFLIFPELLMSRAHPKVALFEETLVCVGCHSNKLLSEQLTLERYMSMGHVVVKFGNARTASFEEWCLLGHGLKRHVEVVVQGFSMVPFMLSGTERIATMPLRLVKQLEKTIPLRIADLPLPLPAFTQALQWPALHNSGQASLWMRDVLCQEASRMPSPHEVMRRLRIS.

Residues 6–63 (LDLNLLVALDALMTERNLTAAARSINLSQPAMSAAVGRLRTYFNDDLFTMVGRELVPT) enclose the HTH lysR-type domain. Positions 23–42 (LTAAARSINLSQPAMSAAVG) form a DNA-binding region, H-T-H motif.

This sequence belongs to the LysR transcriptional regulatory family.

Its function is as follows. NodD regulates the expression of the nodABCFE genes which encode other nodulation proteins. NodD is also a negative regulator of its own expression. Binds flavonoids as inducers. The protein is Nodulation protein D 1 (nodD1) of Rhizobium leguminosarum bv. phaseoli.